Consider the following 235-residue polypeptide: Small ribosomal subunit protein uS2 (235 aa).

Belongs to the universal ribosomal protein uS2 family.

This chain is Small ribosomal subunit protein uS2, found in Thermoanaerobacter pseudethanolicus (strain ATCC 33223 / 39E) (Clostridium thermohydrosulfuricum).